A 454-amino-acid chain; its full sequence is Protein odr-4 homolog (454 aa).

2 consecutive transmembrane segments (helical) span residues 82–102 (MLPG…ELAN) and 432–452 (IGVI…FHYF).

It belongs to the ODR-4 family.

Its subcellular location is the membrane. In terms of biological role, may play a role in the trafficking of a subset of G-protein coupled receptors. The chain is Protein odr-4 homolog (ODR4) from Pongo abelii (Sumatran orangutan).